The chain runs to 859 residues: Envelope glycoprotein gp160 (859 aa).

Positions 1–23 (MAYFSSRLPIALLLIGISGFVCK) are cleaved as a signal peptide. Topologically, residues 24–678 (QYVTVFYGIP…WFDLTSWIKY (655 aa)) are extracellular. N37 is a glycosylation site (N-linked (GlcNAc...) asparagine; by host). C44 and C57 are disulfide-bonded. N70, N112, N122, N142, N150, N165, N191, N206, N238, N241, N248, N272, N278, N289, N300, N310, N343, N367, N400, N410, N413, N450, N464, and N468 each carry an N-linked (GlcNAc...) asparagine; by host glycan. Cystine bridges form between C101-C214, C108-C205, C113-C164, C227-C257, and C237-C249. The segment at 113–163 (CSKTETNPGNASSTTTTKPTTTSRGLKTINETDPCIKNDSCTGLGEEEIMQ) is V1. The segment at 164–205 (CNFSMTGLRRDELKQYKDTWYSEDLECNNTRKYTSRCYIRTC) is V2. A V3 region spans residues 305–337 (CKRPGNKTVVPIRTVSGLLFHSQPINKRPRQAW). C305 and C338 form a disulfide bridge. 2 cysteine pairs are disulfide-bonded: C392/C449 and C399/C422. The interval 399-422 (CNMTWFLNWVENKTNTTRRNYAPC) is V4. The segment at 465–471 (STTNISV) is V5. A fusion peptide region spans residues 514–534 (GVMVLGFLGFLAMAGSAMGAT). The segment at 577 to 593 (LQARVTAIEKYLKDQAQ) is immunosuppression. N-linked (GlcNAc...) asparagine; by host glycosylation is found at N613, N622, and N638. Residues 626–647 (QQWEKQVHFLDANITALLEEAQ) are a coiled coil. The MPER; binding to GalCer stretch occupies residues 659-680 (KINSWDVFGNWFDLTSWIKYIH). A helical membrane pass occupies residues 679 to 699 (IHLGLYIVAGLVVLRIVVYIV). Residues 700–859 (QMLARLRKGY…IRQGLELTLL (160 aa)) are Cytoplasmic-facing. The YXXV motif; contains endocytosis signal motif lies at 709–712 (YRPV). The disordered stretch occupies residues 715-744 (SPPSYTQQIPIRKDRGQPANEETEEGGGND). A lipid anchor (S-palmitoyl cysteine; by host) is attached at C775. The Di-leucine internalization motif signature appears at 858–859 (LL).

The mature envelope protein (Env) consists of a homotrimer of non-covalently associated gp120-gp41 heterodimers. The resulting complex protrudes from the virus surface as a spike. There seems to be as few as 10 spikes on the average virion. Interacts with human CD4, CCR5 and CXCR4, to form a P4HB/PDI-CD4-CXCR4-gp120 complex. Gp120 also interacts with the C-type lectins CD209/DC-SIGN and CLEC4M/DC-SIGNR (collectively referred to as DC-SIGN(R)). Gp120 and gp41 interact with GalCer. As to quaternary structure, the mature envelope protein (Env) consists of a homotrimer of non-covalently associated gp120-gp41 heterodimers. The resulting complex protrudes from the virus surface as a spike. There seems to be as few as 10 spikes on the average virion. In terms of processing, specific enzymatic cleavages in vivo yield mature proteins. Envelope glycoproteins are synthesized as an inactive precursor that is heavily N-glycosylated and processed likely by host cell furin in the Golgi to yield the mature SU and TM proteins. The cleavage site between SU and TM requires the minimal sequence [KR]-X-[KR]-R. Palmitoylation of the transmembrane protein and of Env polyprotein (prior to its proteolytic cleavage) is essential for their association with host cell membrane lipid rafts. Palmitoylation is therefore required for envelope trafficking to classical lipid rafts, but not for viral replication.

The protein resides in the virion membrane. Its subcellular location is the host cell membrane. It is found in the host endosome membrane. The surface protein gp120 (SU) attaches the virus to the host lymphoid cell by binding to the primary receptor CD4. This interaction induces a structural rearrangement creating a high affinity binding site for a chemokine coreceptor like CXCR4 and/or CCR5. This peculiar 2 stage receptor-interaction strategy allows gp120 to maintain the highly conserved coreceptor-binding site in a cryptic conformation, protected from neutralizing antibodies. Since CD4 also displays a binding site for the disulfide-isomerase P4HB/PDI, a P4HB/PDI-CD4-CXCR4-gp120 complex may form. In that complex, P4HB/PDI could reach and reduce gp120 disulfide bonds, causing major conformational changes in gp120. TXN, another PDI family member could also be involved in disulfide rearrangements in Env during fusion. These changes are transmitted to the transmembrane protein gp41 and are thought to activate its fusogenic potential by unmasking its fusion peptide. In terms of biological role, the surface protein gp120 is a ligand for CD209/DC-SIGN and CLEC4M/DC-SIGNR, which are respectively found on dendritic cells (DCs), and on endothelial cells of liver sinusoids and lymph node sinuses. These interactions allow capture of viral particles at mucosal surfaces by these cells and subsequent transmission to permissive cells. DCs are professional antigen presenting cells, critical for host immunity by inducing specific immune responses against a broad variety of pathogens. They act as sentinels in various tissues where they take up antigen, process it, and present it to T-cells following migration to lymphoid organs. HIV subverts the migration properties of dendritic cells to gain access to CD4+ T-cells in lymph nodes. Virus transmission to permissive T-cells occurs either in trans (without DCs infection, through viral capture and transmission), or in cis (following DCs productive infection, through the usual CD4-gp120 interaction), thereby inducing a robust infection. In trans infection, bound virions remain infectious over days and it is proposed that they are not degraded, but protected in non-lysosomal acidic organelles within the DCs close to the cell membrane thus contributing to the viral infectious potential during DCs' migration from the periphery to the lymphoid tissues. On arrival at lymphoid tissues, intact virions recycle back to DCs' cell surface allowing virus transmission to CD4+ T-cells. Virion capture also seems to lead to MHC-II-restricted viral antigen presentation, and probably to the activation of HIV-specific CD4+ cells. Its function is as follows. The transmembrane protein gp41 (TM) acts as a class I viral fusion protein. Under the current model, the protein has at least 3 conformational states: pre-fusion native state, pre-hairpin intermediate state, and post-fusion hairpin state. During fusion of viral and target intracellular membranes, the coiled coil regions (heptad repeats) assume a trimer-of-hairpins structure, positioning the fusion peptide in close proximity to the C-terminal region of the ectodomain. The formation of this structure appears to drive apposition and subsequent fusion of viral and target cell membranes. Complete fusion occurs in host cell endosomes and is dynamin-dependent, however some lipid transfer might occur at the plasma membrane. The virus undergoes clathrin-dependent internalization long before endosomal fusion, thus minimizing the surface exposure of conserved viral epitopes during fusion and reducing the efficacy of inhibitors targeting these epitopes. Membranes fusion leads to delivery of the nucleocapsid into the cytoplasm. Functionally, the envelope glycoprotein gp160 precursor down-modulates cell surface CD4 antigen by interacting with it in the endoplasmic reticulum and blocking its transport to the cell surface. The gp120-gp41 heterodimer seems to contribute to T-cell depletion during HIV-1 infection. The envelope glycoproteins expressed on the surface of infected cells induce apoptosis through an interaction with uninfected cells expressing the receptor (CD4) and the coreceptors CXCR4 or CCR5. This type of bystander killing may be obtained by at least three distinct mechanisms. First, the interaction between the 2 cells can induce cellular fusion followed by nuclear fusion within the syncytium. Syncytia are condemned to die from apoptosis. Second, the 2 interacting cells may not fuse entirely and simply exchange plasma membrane lipids, after a sort of hemifusion process, followed by rapid death. Third, it is possible that virus-infected cells, on the point of undergoing apoptosis, fuse with CD4-expressing cells, in which case apoptosis is rapidly transmitted from one cell to the other and thus occurs in a sort of contagious fashion. In terms of biological role, the gp120-gp41 heterodimer allows rapid transcytosis of the virus through CD4 negative cells such as simple epithelial monolayers of the intestinal, rectal and endocervical epithelial barriers. Both gp120 and gp41 specifically recognize glycosphingolipids galactosyl-ceramide (GalCer) or 3' sulfo-galactosyl-ceramide (GalS) present in the lipid rafts structures of epithelial cells. Binding to these alternative receptors allows the rapid transcytosis of the virus through the epithelial cells. This transcytotic vesicle-mediated transport of virions from the apical side to the basolateral side of the epithelial cells does not involve infection of the cells themselves. The polypeptide is Envelope glycoprotein gp160 (env) (Human immunodeficiency virus type 2 subtype B (isolate D205) (HIV-2)).